The sequence spans 157 residues: Biotin carboxyl carrier protein of acetyl-CoA carboxylase (157 aa).

The Biotinyl-binding domain maps to 80–156 (YATIVSPMVG…DCGQALMKVE (77 aa)). At lysine 122 the chain carries N6-biotinyllysine.

Its subcellular location is the plastid. The protein localises to the chloroplast. The protein operates within lipid metabolism; fatty acid biosynthesis. Functionally, this protein is a component of the acetyl coenzyme A carboxylase complex; first, biotin carboxylase catalyzes the carboxylation of the carrier protein and then the transcarboxylase transfers the carboxyl group to form malonyl-CoA. The chain is Biotin carboxyl carrier protein of acetyl-CoA carboxylase (accB) from Porphyra purpurea (Red seaweed).